Consider the following 293-residue polypeptide: 4-hydroxy-tetrahydrodipicolinate synthase (293 aa).

A pyruvate-binding site is contributed by T44. Y132 serves as the catalytic Proton donor/acceptor. The active-site Schiff-base intermediate with substrate is K160. Position 202 (I202) interacts with pyruvate.

The protein belongs to the DapA family. As to quaternary structure, homotetramer; dimer of dimers.

It localises to the cytoplasm. It carries out the reaction L-aspartate 4-semialdehyde + pyruvate = (2S,4S)-4-hydroxy-2,3,4,5-tetrahydrodipicolinate + H2O + H(+). The protein operates within amino-acid biosynthesis; L-lysine biosynthesis via DAP pathway; (S)-tetrahydrodipicolinate from L-aspartate: step 3/4. Functionally, catalyzes the condensation of (S)-aspartate-beta-semialdehyde [(S)-ASA] and pyruvate to 4-hydroxy-tetrahydrodipicolinate (HTPA). This is 4-hydroxy-tetrahydrodipicolinate synthase from Pelagibacter ubique (strain HTCC1062).